Reading from the N-terminus, the 80-residue chain is Conotoxin Bu3 (80 aa).

An N-terminal signal peptide occupies residues 1–22 (MKLMCVLIVSVLVLTACQLSTA). A propeptide spanning residues 23 to 51 (DDTRDKQKDRLVRLFRKKRDSSDSGLLPR) is cleaved from the precursor. 3 disulfide bridges follow: Cys53–Cys69, Cys60–Cys72, and Cys68–Cys79.

The protein belongs to the conotoxin O1 superfamily. Expressed by the venom duct.

The protein localises to the secreted. This chain is Conotoxin Bu3, found in Conus bullatus (Bubble cone).